Here is a 261-residue protein sequence, read N- to C-terminus: Src-like-adapter 2 (261 aa).

The span at 1–10 (MGSLPSRRKS) shows a compositional bias: basic residues. The tract at residues 1–31 (MGSLPSRRKSLPSPSLSSSVQGQGPVTMEAE) is disordered. The N-myristoyl glycine moiety is linked to residue Gly-2. Residues 32–92 (RSKATAVALG…PSVHVAKVSH (61 aa)) form the SH3 domain. The SH2 domain maps to 94–191 (WLYEGLSREK…DICCLLKEPC (98 aa)). The interval 195–261 (RAGPLPGKDI…NDEAVSLDDA (67 aa)) is SLA C-terminal.

In terms of assembly, interacts (via SH2 domain) with ZAP70 (phosphorylated) and CD3Z (phosphorylated). Interacts (via SH2 domain) with CSF1R (phosphorylated). Interacts (via its C-terminal domain) with CBL (phosphorylated). Post-translationally, phosphorylated by CSF1R. In terms of tissue distribution, predominantly expressed in immune system, with highest levels in peripheral blood leukocytes. Expressed in spleen, thymus and lymph nodes. Expressed in T-cells as well as in monocytes, and at low level in B-cells. Also detected in placenta, prostate, skin, retina and colon.

Its subcellular location is the cytoplasm. It is found in the cell membrane. The protein resides in the cytoplasmic vesicle. In terms of biological role, adapter protein, which negatively regulates T-cell receptor (TCR) signaling. Inhibits T-cell antigen-receptor induced activation of nuclear factor of activated T-cells. May act by linking signaling proteins such as ZAP70 with CBL, leading to a CBL dependent degradation of signaling proteins. The protein is Src-like-adapter 2 (SLA2) of Homo sapiens (Human).